The sequence spans 374 residues: Type IV secretion system protein PtlG homolog (374 aa).

The chain crosses the membrane as a helical span at residues Trp-38–Trp-56. The disordered stretch occupies residues Pro-87–Pro-116. Residues Pro-92 to Pro-116 show a composition bias toward pro residues.

This sequence belongs to the TrbI/VirB10 family.

The protein resides in the cell membrane. The chain is Type IV secretion system protein PtlG homolog (ptlG) from Bordetella parapertussis (strain 12822 / ATCC BAA-587 / NCTC 13253).